The following is a 799-amino-acid chain: Phosphate transporter PHO1-1 (799 aa).

Over 1-406 the chain is Cytoplasmic; it reads MVKFSKQFEG…TQRKESHTVT (406 aa). Residues 2 to 354 enclose the SPX domain; sequence VKFSKQFEGQ…GKQVLSVYLR (353 aa). The segment at 170 to 243 is disordered; the sequence is SLSGHHRAAA…GSLSRQSLGR (74 aa). Positions 180-193 are enriched in low complexity; that stretch reads GDDPSISSSSATSG. A compositionally biased stretch (basic and acidic residues) spans 210 to 222; the sequence is ESQHETAVMRDPE. Polar residues predominate over residues 234–243; it reads GSLSRQSLGR. The helical transmembrane segment at 407-427 threads the bilayer; sequence FFIGLMTGCFVALFLGYCIMA. Over 428–447 the chain is Extracellular; that stretch reads HIAGMYTQRRDSIYMETVYP. A helical membrane pass occupies residues 448–468; that stretch reads VFSMFSLMFLHLFMYGCNMVA. Topologically, residues 469–492 are cytoplasmic; the sequence is WRKARINYSFIFEFAAGRELKYRD. Residues 493 to 513 form a helical membrane-spanning segment; it reads VFLVCTASMAVIVGVMFAHLS. Residues 514 to 522 lie on the Extracellular side of the membrane; sequence LAVRGFHAQ. A helical transmembrane segment spans residues 523 to 543; it reads AIPGFLLLGFLLLLFCPFNMV. The Cytoplasmic portion of the chain corresponds to 544–672; the sequence is YRSTRFQFLR…AYEKDRSLGS (129 aa). The EXS domain maps to 608-799; that stretch reads INTKHIRDLA…LPFHEADEED (192 aa). Residues 673 to 693 form a helical membrane-spanning segment; the sequence is LSLLVIVSSSATMYQLYWDFV. Over 694–718 the chain is Extracellular; it reads KDWGLLQPNSKNPWLRNDLILKSKS. A helical transmembrane segment spans residues 719-739; that stretch reads IYYLSMGLNLVLRLAWLQTVI. Over 740-799 the chain is Cytoplasmic; sequence HPNFGSLDSRVTSFFLAALEVIRRGHWNFYRLENEHLNNAGKFRAVKTVPLPFHEADEED.

Belongs to the SYG1 (TC 2.A.94) family. As to expression, expressed in roots and flowers.

It localises to the cell membrane. May transport inorganic phosphate (Pi). This chain is Phosphate transporter PHO1-1 (PHO1-1), found in Oryza sativa subsp. japonica (Rice).